The sequence spans 198 residues: Ribonuclease HII (198 aa).

Residues 14–198 (HMIVGVDEAG…FAPVAQLQLV (185 aa)) form the RNase H type-2 domain. A divalent metal cation-binding residues include Asp20, Glu21, and Asp110.

This sequence belongs to the RNase HII family. Mn(2+) is required as a cofactor. It depends on Mg(2+) as a cofactor.

The protein resides in the cytoplasm. It catalyses the reaction Endonucleolytic cleavage to 5'-phosphomonoester.. Functionally, endonuclease that specifically degrades the RNA of RNA-DNA hybrids. The polypeptide is Ribonuclease HII (Sphingopyxis alaskensis (strain DSM 13593 / LMG 18877 / RB2256) (Sphingomonas alaskensis)).